The sequence spans 144 residues: High mobility group B protein 2 (144 aa).

Basic and acidic residues-rich tracts occupy residues 1 to 12 (MKGAKSKTETRS) and 73 to 94 (AGDK…KAEK). Disordered stretches follow at residues 1–42 (MKGA…KRPA), 57–94 (KKEN…KAEK), and 106–144 (YNKK…EDDD). Residues 38–107 (PKRPASAFFV…EYEKNIKAYN (70 aa)) constitute a DNA-binding region (HMG box). S125 is subject to Phosphoserine. A compositionally biased stretch (acidic residues) spans 127 to 144 (VNDEDDAEDGSEEEEDDD).

The protein belongs to the HMGB family. As to expression, mostly expressed in cotyledons, hypocotyls, leaves, and flowers (excluding pedicels), also present in roots and stems.

It localises to the nucleus. The protein resides in the cytoplasm. Its subcellular location is the cytosol. In terms of biological role, binds preferentially double-stranded DNA. Confers sensitivity to salt and drought stresses. This is High mobility group B protein 2 (HMGB2) from Arabidopsis thaliana (Mouse-ear cress).